A 586-amino-acid polypeptide reads, in one-letter code: Phosphomethylpyrimidine synthase (586 aa).

The interval 1–59 (MKQSVSAEQIELKSSLPGSKKVYVDGPREGMKVPMREIEQSETNGVPNPPIRVYDTSGP) is disordered. The span at 22–39 (VYVDGPREGMKVPMREIE) shows a compositional bias: basic and acidic residues. Substrate contacts are provided by residues Asn193, Met222, Tyr251, His287, 307-309 (SRG), 348-351 (DGLR), and Glu387. His391 provides a ligand contact to Zn(2+). Position 414 (Tyr414) interacts with substrate. Position 455 (His455) interacts with Zn(2+). 3 residues coordinate [4Fe-4S] cluster: Cys535, Cys538, and Cys543.

Belongs to the ThiC family. It depends on [4Fe-4S] cluster as a cofactor.

It carries out the reaction 5-amino-1-(5-phospho-beta-D-ribosyl)imidazole + S-adenosyl-L-methionine = 4-amino-2-methyl-5-(phosphooxymethyl)pyrimidine + CO + 5'-deoxyadenosine + formate + L-methionine + 3 H(+). It functions in the pathway cofactor biosynthesis; thiamine diphosphate biosynthesis. Functionally, catalyzes the synthesis of the hydroxymethylpyrimidine phosphate (HMP-P) moiety of thiamine from aminoimidazole ribotide (AIR) in a radical S-adenosyl-L-methionine (SAM)-dependent reaction. The polypeptide is Phosphomethylpyrimidine synthase (Bacillus cereus (strain ATCC 14579 / DSM 31 / CCUG 7414 / JCM 2152 / NBRC 15305 / NCIMB 9373 / NCTC 2599 / NRRL B-3711)).